Here is a 220-residue protein sequence, read N- to C-terminus: Mediator of RNA polymerase II transcription subunit 19 (220 aa).

Residues 171-220 (AFDLDGTGKSQSGSNSGNNSKKRKNKSSGSSMATPTHSDSHEDMKRRRLE) form a disordered region. The span at 178–189 (GKSQSGSNSGNN) shows a compositional bias: low complexity. Basic and acidic residues predominate over residues 208–220 (SDSHEDMKRRRLE).

It belongs to the Mediator complex subunit 19 family. In terms of assembly, component of the Mediator complex, which is composed of at least 21 subunits that form three structurally distinct submodules. The Mediator head module contains MED6, MED8, MED11, SRB4/MED17, SRB5/MED18, ROX3/MED19, SRB2/MED20 and SRB6/MED22, the middle module contains MED1, MED4, NUT1/MED5, MED7, CSE2/MED9, NUT2/MED10, SRB7/MED21 and SOH1/MED31, and the tail module contains MED2, PGD1/MED3, RGR1/MED14, GAL11/MED15 and SIN4/MED16. The head and the middle modules interact directly with RNA polymerase II, whereas the elongated tail module interacts with gene-specific regulatory proteins.

It localises to the nucleus. Component of the Mediator complex, a coactivator involved in the regulated transcription of nearly all RNA polymerase II-dependent genes. Mediator functions as a bridge to convey information from gene-specific regulatory proteins to the basal RNA polymerase II transcription machinery. The Mediator complex, having a compact conformation in its free form, is recruited to promoters by direct interactions with regulatory proteins and serves for the assembly of a functional preinitiation complex with RNA polymerase II and the general transcription factors. The Mediator complex unfolds to an extended conformation and partially surrounds RNA polymerase II, specifically interacting with the unphosphorylated form of the C-terminal domain (CTD) of RNA polymerase II. The Mediator complex dissociates from the RNA polymerase II holoenzyme and stays at the promoter when transcriptional elongation begins. The polypeptide is Mediator of RNA polymerase II transcription subunit 19 (ROX3) (Saccharomyces cerevisiae (strain ATCC 204508 / S288c) (Baker's yeast)).